Consider the following 787-residue polypeptide: Integrin beta-6 (787 aa).

The signal sequence occupies residues 1–21 (MGIELVCLFLLLLGRNDHVQG). One can recognise a PSI domain in the interval 22 to 71 (GCAWSGAETCSDCLLTGPHCAWCSQENFTHLSGAGERCDTPENLLAKGCQ). The Extracellular segment spans residues 22 to 708 (GCAWSGAETC…KDCPKPPNIP (687 aa)). 19 disulfide bridges follow: C23/C41, C31/C454, C34/C59, C44/C70, C197/C204, C252/C293, C394/C406, C426/C452, C456/C476, C467/C479, C481/C490, C492/C519, C502/C517, C511/C522, C524/C537, C539/C560, C544/C558, C552/C563, and C565/C574. 2 N-linked (GlcNAc...) asparagine glycosylation sites follow: N48 and N97. The region spanning 131–371 (YPVDLYYLMD…QLIISAYEEL (241 aa)) is the VWFA domain. Mg(2+) is bound by residues D140, S142, and S144. 4 residues coordinate Ca(2+): S144, D147, D148, and E179. The Ca(2+) site is built by N235, D237, P239, and E240. E240 is a Mg(2+) binding site. N-linked (GlcNAc...) asparagine glycosylation is present at N260. 2 residues coordinate Ca(2+): D271 and K355. N387 carries N-linked (GlcNAc...) asparagine glycosylation. N418 carries N-linked (GlcNAc...) asparagine glycosylation. 4 I-EGF domains span residues 456 to 491 (CQRE…PRCE), 492 to 538 (CGED…PYCQ), 539 to 575 (CDNF…EYCN), and 576 to 615 (CTTS…PTCE). 2 N-linked (GlcNAc...) asparagine glycosylation sites follow: N463 and N471. N541 carries N-linked (GlcNAc...) asparagine glycosylation. A glycan (N-linked (GlcNAc...) asparagine) is linked at N575. 9 cysteine pairs are disulfide-bonded: C576–C599, C583–C597, C591–C602, C604–C614, C617–C620, C624–C669, C630–C649, C633–C645, and C677–C701. N695 is a glycosylation site (N-linked (GlcNAc...) asparagine). Residues 709–729 (MIMLGVSLAILLIGVVLLCIW) form a helical membrane-spanning segment. An interaction with HAX1 region spans residues 730–757 (KLLVSFHDRKEVAKFEAERSKAKWQTGT). Topologically, residues 730-787 (KLLVSFHDRKEVAKFEAERSKAKWQTGTNPLYRGSTSTFKNVTYKHREKHKVGLSSDG) are cytoplasmic.

The protein belongs to the integrin beta chain family. In terms of assembly, heterodimer of an alpha and a beta subunit. Interacts with FLNB. Interacts with HAX1. ITGAV:ITGB6 interacts with FBN1. ITGAV:ITGB6 interacts with TGFB1.

It localises to the cell membrane. It is found in the cell junction. The protein localises to the focal adhesion. Its function is as follows. Integrin alpha-V:beta-6 (ITGAV:ITGB6) is a receptor for fibronectin and cytotactin. It recognizes the sequence R-G-D in its ligands. ITGAV:ITGB6 acts as a receptor for fibrillin-1 (FBN1) and mediates R-G-D-dependent cell adhesion to FBN1. Integrin alpha-V:beta-6 (ITGAV:ITGB6) mediates R-G-D-dependent release of transforming growth factor beta-1 (TGF-beta-1) from regulatory Latency-associated peptide (LAP), thereby playing a key role in TGF-beta-1 activation. This chain is Integrin beta-6 (Itgb6), found in Rattus norvegicus (Rat).